The following is a 254-amino-acid chain: Alcohol dehydrogenase (254 aa).

NAD(+) is bound at residue 10–33 (FVAGLGGIGLETSREIVKSGPKNL). Serine 138 contacts substrate. Residue tyrosine 151 is the Proton acceptor of the active site.

Belongs to the short-chain dehydrogenases/reductases (SDR) family. In terms of assembly, homodimer.

The catalysed reaction is a primary alcohol + NAD(+) = an aldehyde + NADH + H(+). The enzyme catalyses a secondary alcohol + NAD(+) = a ketone + NADH + H(+). The protein is Alcohol dehydrogenase (Adh) of Scaptomyza crassifemur (Fruit fly).